Consider the following 160-residue polypeptide: Endoribonuclease YbeY (160 aa).

3 residues coordinate Zn(2+): His-125, His-129, and His-135.

This sequence belongs to the endoribonuclease YbeY family. Requires Zn(2+) as cofactor.

Its subcellular location is the cytoplasm. Single strand-specific metallo-endoribonuclease involved in late-stage 70S ribosome quality control and in maturation of the 3' terminus of the 16S rRNA. The polypeptide is Endoribonuclease YbeY (Dehalococcoides mccartyi (strain ATCC BAA-2100 / JCM 16839 / KCTC 5957 / BAV1)).